Reading from the N-terminus, the 29-residue chain is Cyclotide mobo-A (29 aa).

The segment at residues G1–N29 is a cross-link (cyclopeptide (Gly-Asn)). Intrachain disulfides connect C5-C19, C9-C21, and C14-C26.

It belongs to the cyclotide family. Moebius subfamily. This is a cyclic peptide.

Its function is as follows. Probably participates in a plant defense mechanism. The sequence is that of Cyclotide mobo-A from Melicytus obovatus (Hymenanthera obovata).